The following is a 261-amino-acid chain: Ribosomal RNA small subunit methyltransferase J (261 aa).

Residues 129–130 and Asp182 each bind S-adenosyl-L-methionine; that span reads ER.

The protein belongs to the methyltransferase superfamily. RsmJ family.

Its subcellular location is the cytoplasm. It catalyses the reaction guanosine(1516) in 16S rRNA + S-adenosyl-L-methionine = N(2)-methylguanosine(1516) in 16S rRNA + S-adenosyl-L-homocysteine + H(+). Specifically methylates the guanosine in position 1516 of 16S rRNA. The chain is Ribosomal RNA small subunit methyltransferase J from Desulfotalea psychrophila (strain LSv54 / DSM 12343).